We begin with the raw amino-acid sequence, 433 residues long: Cysteine--tRNA ligase (433 aa).

C4 is a Zn(2+) binding site. The short motif at 6 to 16 (PTVYDTAHIGN) is the 'HIGH' region element. Residues C188, H213, and E217 each contribute to the Zn(2+) site. Residues 246-250 (KMSKS) carry the 'KMSKS' region motif. K249 lines the ATP pocket.

The protein belongs to the class-I aminoacyl-tRNA synthetase family. In terms of assembly, monomer. Zn(2+) serves as cofactor.

The protein localises to the cytoplasm. It carries out the reaction tRNA(Cys) + L-cysteine + ATP = L-cysteinyl-tRNA(Cys) + AMP + diphosphate. The chain is Cysteine--tRNA ligase from Wolbachia sp. subsp. Brugia malayi (strain TRS).